The primary structure comprises 328 residues: Malate dehydrogenase (328 aa).

12–18 (GAAGQIA) lines the NAD(+) pocket. Residues Arg-93 and Arg-99 each coordinate substrate. NAD(+)-binding positions include Asn-106, Gln-113, and 130–132 (VGN). Residues Asn-132 and Arg-163 each coordinate substrate. The Proton acceptor role is filled by His-188.

The protein belongs to the LDH/MDH superfamily. MDH type 2 family.

It carries out the reaction (S)-malate + NAD(+) = oxaloacetate + NADH + H(+). Catalyzes the reversible oxidation of malate to oxaloacetate. This is Malate dehydrogenase from Burkholderia lata (strain ATCC 17760 / DSM 23089 / LMG 22485 / NCIMB 9086 / R18194 / 383).